Consider the following 308-residue polypeptide: Acetyl-coenzyme A carboxylase carboxyl transferase subunit beta (308 aa).

Residues 25–294 enclose the CoA carboxyltransferase N-terminal domain; sequence VWTKCTSCEQ…PLVVSVNDAP (270 aa). 4 residues coordinate Zn(2+): Cys29, Cys32, Cys48, and Cys51. The segment at 29 to 51 adopts a C4-type zinc-finger fold; it reads CTSCEQVLYYAELERNLEVCPKC.

It belongs to the AccD/PCCB family. As to quaternary structure, acetyl-CoA carboxylase is a heterohexamer composed of biotin carboxyl carrier protein (AccB), biotin carboxylase (AccC) and two subunits each of ACCase subunit alpha (AccA) and ACCase subunit beta (AccD). Zn(2+) is required as a cofactor.

The protein resides in the cytoplasm. The enzyme catalyses N(6)-carboxybiotinyl-L-lysyl-[protein] + acetyl-CoA = N(6)-biotinyl-L-lysyl-[protein] + malonyl-CoA. The protein operates within lipid metabolism; malonyl-CoA biosynthesis; malonyl-CoA from acetyl-CoA: step 1/1. Functionally, component of the acetyl coenzyme A carboxylase (ACC) complex. Biotin carboxylase (BC) catalyzes the carboxylation of biotin on its carrier protein (BCCP) and then the CO(2) group is transferred by the transcarboxylase to acetyl-CoA to form malonyl-CoA. The polypeptide is Acetyl-coenzyme A carboxylase carboxyl transferase subunit beta (Vibrio cholerae serotype O1 (strain ATCC 39541 / Classical Ogawa 395 / O395)).